Reading from the N-terminus, the 418-residue chain is MIPTADPILSFNPEALPPSALHMLSLSPKAMEKMSGISNPLVSPNAIPPRTSSTGIPTSLNATPTKPVLRPVPEGDWLSQKQLSPRAQMSNAGYGVMQAPNPPPDPERYAHEDLEFTAKRSWTDEKENVVRGPYDYVISHPGKDFRAQLIGAFNVWLDVPTSSLEVITRVVGMLHESSLLIDDVQDSSELRRGFPVAHNIFGVAQTINSGNYIYFVALQELHKLNNPELITIFSDELVNLHRGQGMDLFWCDTLTCPTEEDYLEMVGNKTGGLFRLGIKLMAAEANGPSPTDCVPLVNLIGLIFQIRDDYMNLSSKEYSHNKGMCEDLTEGKFSFPVIHSIRTNPTNLQLINILKQKTSDTQIKRYAVAYMESTGSFEYTRKVLSVLIERARKMAEELDQGRGSTKGIQKILDKMAIQ.

Positions 51–64 are enriched in polar residues; it reads TSSTGIPTSLNATP. Positions 51 to 73 are disordered; it reads TSSTGIPTSLNATPTKPVLRPVP. 3 residues coordinate isopentenyl diphosphate: lysine 143, arginine 146, and histidine 175. Mg(2+)-binding residues include aspartate 182 and aspartate 186. Arginine 191 serves as a coordination point for dimethylallyl diphosphate. Position 192 (arginine 192) interacts with isopentenyl diphosphate. Lysine 269, threonine 270, glutamine 305, lysine 322, and lysine 332 together coordinate dimethylallyl diphosphate.

This sequence belongs to the FPP/GGPP synthase family. Mg(2+) serves as cofactor.

The protein localises to the cytoplasm. It catalyses the reaction isopentenyl diphosphate + dimethylallyl diphosphate = (2E)-geranyl diphosphate + diphosphate. The enzyme catalyses isopentenyl diphosphate + (2E)-geranyl diphosphate = (2E,6E)-farnesyl diphosphate + diphosphate. It carries out the reaction isopentenyl diphosphate + (2E,6E)-farnesyl diphosphate = (2E,6E,10E)-geranylgeranyl diphosphate + diphosphate. It functions in the pathway isoprenoid biosynthesis; farnesyl diphosphate biosynthesis; farnesyl diphosphate from geranyl diphosphate and isopentenyl diphosphate: step 1/1. It participates in isoprenoid biosynthesis; geranyl diphosphate biosynthesis; geranyl diphosphate from dimethylallyl diphosphate and isopentenyl diphosphate: step 1/1. Its pathway is isoprenoid biosynthesis; geranylgeranyl diphosphate biosynthesis; geranylgeranyl diphosphate from farnesyl diphosphate and isopentenyl diphosphate: step 1/1. Its function is as follows. Catalyzes the trans-addition of the three molecules of IPP onto DMAPP to form geranylgeranyl pyrophosphate. This is Geranylgeranyl pyrophosphate synthase (GGS) from Fusarium fujikuroi (Bakanae and foot rot disease fungus).